A 153-amino-acid chain; its full sequence is Large ribosomal subunit protein uL15 (153 aa).

The segment at 21–42 (RGIGSGKGKTGGRGIKGQKSRS) is disordered. A compositionally biased stretch (gly residues) spans 23–35 (IGSGKGKTGGRGI).

Belongs to the universal ribosomal protein uL15 family. As to quaternary structure, part of the 50S ribosomal subunit.

In terms of biological role, binds to the 23S rRNA. This Rickettsia peacockii (strain Rustic) protein is Large ribosomal subunit protein uL15.